The primary structure comprises 213 residues: Thymidylate kinase (213 aa).

9–16 contributes to the ATP binding site; sequence GIEGCGKT.

It belongs to the thymidylate kinase family.

The catalysed reaction is dTMP + ATP = dTDP + ADP. Functionally, phosphorylation of dTMP to form dTDP in both de novo and salvage pathways of dTTP synthesis. The chain is Thymidylate kinase from Geobacter sulfurreducens (strain ATCC 51573 / DSM 12127 / PCA).